The sequence spans 130 residues: Small ribosomal subunit protein uS11 (130 aa).

Positions 111 to 130 (IRDVTPVPHNGSRPPKRRRA) are disordered.

This sequence belongs to the universal ribosomal protein uS11 family. Part of the 30S ribosomal subunit. Interacts with proteins S7 and S18. Binds to IF-3.

Functionally, located on the platform of the 30S subunit, it bridges several disparate RNA helices of the 16S rRNA. Forms part of the Shine-Dalgarno cleft in the 70S ribosome. The polypeptide is Small ribosomal subunit protein uS11 (Lactobacillus acidophilus (strain ATCC 700396 / NCK56 / N2 / NCFM)).